The chain runs to 510 residues: Probable ADP-ribosylation factor-binding protein C1F3.05 (510 aa).

Residues 14-150 (ATDQFNLEPN…LMAFRGYKFP (137 aa)) enclose the VHS domain. One can recognise a GAT domain in the interval 177 to 301 (LEAHKAKLQE…VIEECSNSDL (125 aa)). The 120-residue stretch at 391–510 (TNSSLTSILQ…VEQGESHLPL (120 aa)) folds into the GAE domain.

It localises to the golgi apparatus. Its subcellular location is the trans-Golgi network. Functionally, may play a role in the regulation of membrane traffic through the trans-Golgi network. This is Probable ADP-ribosylation factor-binding protein C1F3.05 from Schizosaccharomyces pombe (strain 972 / ATCC 24843) (Fission yeast).